A 321-amino-acid chain; its full sequence is Putative pyridoxal kinase (321 aa).

Residues Ser-23 and Tyr-144 each contribute to the substrate site. Residues 203 to 204 and 230 to 242 contribute to the ATP site; these read TS and TFPRLVGQFVGTG. Asp-243 is a binding site for substrate.

This sequence belongs to the pyridoxine kinase family. Zn(2+) serves as cofactor. Mg(2+) is required as a cofactor.

The catalysed reaction is pyridoxal + ATP = pyridoxal 5'-phosphate + ADP + H(+). Required for synthesis of pyridoxal-5-phosphate from vitamin B6. The sequence is that of Putative pyridoxal kinase from Caenorhabditis elegans.